Reading from the N-terminus, the 433-residue chain is Tol-Pal system protein TolB (433 aa).

The signal sequence occupies residues 1-21 (MRNLLRGMLVVICCMAGIVMA).

Belongs to the TolB family. In terms of assembly, the Tol-Pal system is composed of five core proteins: the inner membrane proteins TolA, TolQ and TolR, the periplasmic protein TolB and the outer membrane protein Pal. They form a network linking the inner and outer membranes and the peptidoglycan layer.

The protein localises to the periplasm. Part of the Tol-Pal system, which plays a role in outer membrane invagination during cell division and is important for maintaining outer membrane integrity. This chain is Tol-Pal system protein TolB, found in Pseudomonas fluorescens (strain Pf0-1).